Consider the following 500-residue polypeptide: Aspartyl/glutamyl-tRNA(Asn/Gln) amidotransferase subunit B (500 aa).

It belongs to the GatB/GatE family. GatB subfamily. In terms of assembly, heterotrimer of A, B and C subunits.

It carries out the reaction L-glutamyl-tRNA(Gln) + L-glutamine + ATP + H2O = L-glutaminyl-tRNA(Gln) + L-glutamate + ADP + phosphate + H(+). The enzyme catalyses L-aspartyl-tRNA(Asn) + L-glutamine + ATP + H2O = L-asparaginyl-tRNA(Asn) + L-glutamate + ADP + phosphate + 2 H(+). Allows the formation of correctly charged Asn-tRNA(Asn) or Gln-tRNA(Gln) through the transamidation of misacylated Asp-tRNA(Asn) or Glu-tRNA(Gln) in organisms which lack either or both of asparaginyl-tRNA or glutaminyl-tRNA synthetases. The reaction takes place in the presence of glutamine and ATP through an activated phospho-Asp-tRNA(Asn) or phospho-Glu-tRNA(Gln). The chain is Aspartyl/glutamyl-tRNA(Asn/Gln) amidotransferase subunit B from Allorhizobium ampelinum (strain ATCC BAA-846 / DSM 112012 / S4) (Agrobacterium vitis (strain S4)).